The following is a 425-amino-acid chain: Phosphomethylpyrimidine synthase (425 aa).

Substrate-binding positions include M94, Y123, H162, 184 to 186 (SRG), 225 to 228 (NGMR), and E264. H268 is a Zn(2+) binding site. Residue Y291 participates in substrate binding. H332 lines the Zn(2+) pocket. Residues C407, C410, and C414 each coordinate [4Fe-4S] cluster.

It belongs to the ThiC family. [4Fe-4S] cluster serves as cofactor.

It carries out the reaction 5-amino-1-(5-phospho-beta-D-ribosyl)imidazole + S-adenosyl-L-methionine = 4-amino-2-methyl-5-(phosphooxymethyl)pyrimidine + CO + 5'-deoxyadenosine + formate + L-methionine + 3 H(+). It functions in the pathway cofactor biosynthesis; thiamine diphosphate biosynthesis. Its function is as follows. Catalyzes the synthesis of the hydroxymethylpyrimidine phosphate (HMP-P) moiety of thiamine from aminoimidazole ribotide (AIR) in a radical S-adenosyl-L-methionine (SAM)-dependent reaction. This Methanoregula boonei (strain DSM 21154 / JCM 14090 / 6A8) protein is Phosphomethylpyrimidine synthase.